The sequence spans 569 residues: Linoleate hydratase (569 aa).

Tyr-87 is an FAD binding site. Tyr-205 acts as the Proton donor in catalysis. FAD is bound by residues Val-254, Ser-300, and Thr-524.

It belongs to the oleate hydratase family. FAD serves as cofactor.

It localises to the cell membrane. Its subcellular location is the cytoplasm. The enzyme catalyses (9Z,12Z)-octadecadienoate + H2O = (10S)-hydroxy-(12Z)-octadecenoate. It catalyses the reaction (10E,12Z)-octadecadienoate + H2O = (10S)-hydroxy-(12Z)-octadecenoate. It carries out the reaction (9Z)-octadecenoate + H2O = 10-hydroxyoctadecanoate. The catalysed reaction is (10E)-octadecenoate + H2O = 10-hydroxyoctadecanoate. The enzyme catalyses (9E,11E)-octadecadienoate + H2O = 10-hydroxy-(11E)-octadecenoate. It catalyses the reaction (9Z,11E)-octadecadienoate + H2O = 10-hydroxy-(11E)-octadecenoate. It carries out the reaction (9Z)-hexadecenoate + H2O = 10-hydroxyhexadecanoate. The catalysed reaction is (9Z,12Z,15Z)-octadecatrienoate + H2O = (10S)-hydroxy-(12Z,15Z)-octadecadienoate. The enzyme catalyses (6Z,9Z,12Z)-octadecatrienoate + H2O = (10S)-hydroxy-(6Z,12Z)-octadecadienoate. It catalyses the reaction (6Z,9Z,12Z,15Z)-octadecatetraenoate + H2O = (10S)-hydroxy-(6Z,12Z,15Z)-octadecatrienoate. It functions in the pathway lipid metabolism; fatty acid metabolism. Its activity is regulated as follows. The addition of NADH or NADPH highly increases catalytic activity, likely by reducing the cofactor FAD to FADH2. The hydration and dehydration reactions are strongly inhibited by Ag(+), Fe(2+), Cu(2+), Zn(2+), Hg(2+), and Fe(3+). Its function is as follows. Is involved in a saturation metabolic pathway of polyunsaturated fatty acids, that detoxifies unsaturated fatty acids and generates hydroxy fatty acids, oxo fatty acids, conjugated fatty acids such as conjugated linoleic acids (CLAs), and partially saturated trans-fatty acids as intermediates. CLA-HY catalyzes the hydration and dehydration steps in the production of 10-hydroxy-cis-12-octadecenoate, trans-10,cis-12-CLA, cis-9,trans-11-CLA, trans-9,trans-11-CLA, oleate and trans-10-octadecenoate during linoleate metabolism. Is also able to hydrate palmitoleic acid (cis-9-hexadecenoic acid), oleic acid, alpha-linolenic acid, gamma-linolenic acid, and stearidonic acid into the corresponding 10-hydroxy fatty acids, and dehydrate 10-hydroxy-cis-12,cis-15-octadecadienoic acid, 10-hydroxy-cis-6,cis-12-octadecadienoic acid, and 10-hydroxyoctadecanoic acid into the corresponding fatty acids with cis double bonds at the Delta9 position. As part of the gut microbiome, this enzyme modifies host fatty acid composition and is expected to improve human health by altering lipid metabolism related to the onset of metabolic syndrome. Shows regioselectivity for Delta9 double bond hydration, generating C10 hydroxy groups in the (S)-configuration with high enantioselectivity, when another double bond is in position 12. Is not able to hydrate fatty acids with a trans carbon-carbon double bond at Delta9 position (elaidic acid, trans-9-octadecenoic acid), fatty acid esters (methyl linoleate, monolinolein, dilinolein, and trilinolein), and conjugated fatty acids (conjugated linoleic acids), as well as fatty acids with other chain lengths, such as myristoleic acid (cis-9-tetradecenoic acid), arachidonic acid (cis-5,cis-8,cis-11,cis-14-eicosatetraenoic acid), EPA (cis-5,cis-8,cis-11,cis-14,cis-17-eicosapentaenoic acid), DHA (cis-4,cis-7,cis-10,cis-13,cis-16,cis-19-docosahexaenoic acid) and fatty acids with a cis carbon-carbon double bond at Delta11 position, such as cis-vaccenic acid and cis-11-octadecenoic acid, or fatty alcohols, such as linoleyl alcohol. Is not able to dehydrate 12-hydroxy, 3-hydroxy, and 9-hydroxy fatty acids. The chain is Linoleate hydratase from Lactiplantibacillus plantarum (Lactobacillus plantarum).